We begin with the raw amino-acid sequence, 136 residues long: SPbeta prophage-derived uncharacterized protein YonI (136 aa).

This is SPbeta prophage-derived uncharacterized protein YonI (yonI) from Bacillus subtilis (strain 168).